The sequence spans 203 residues: Holliday junction branch migration complex subunit RuvA (203 aa).

The domain I stretch occupies residues 1–64 (MFAYFRGRLT…EDAFLLYGFS (64 aa)). The interval 65–143 (SESERQLFRL…KMSPDGGKTI (79 aa)) is domain II. Residues 144–150 (ASGSGGN) are flexible linker. The segment at 151-203 (LALQIKDDALNALITLGFSKPAAQKAVTGILEGNPSLSVEEVVKSALVSIHNS) is domain III.

It belongs to the RuvA family. In terms of assembly, homotetramer. Forms an RuvA(8)-RuvB(12)-Holliday junction (HJ) complex. HJ DNA is sandwiched between 2 RuvA tetramers; dsDNA enters through RuvA and exits via RuvB. An RuvB hexamer assembles on each DNA strand where it exits the tetramer. Each RuvB hexamer is contacted by two RuvA subunits (via domain III) on 2 adjacent RuvB subunits; this complex drives branch migration. In the full resolvosome a probable DNA-RuvA(4)-RuvB(12)-RuvC(2) complex forms which resolves the HJ.

It localises to the cytoplasm. The RuvA-RuvB-RuvC complex processes Holliday junction (HJ) DNA during genetic recombination and DNA repair, while the RuvA-RuvB complex plays an important role in the rescue of blocked DNA replication forks via replication fork reversal (RFR). RuvA specifically binds to HJ cruciform DNA, conferring on it an open structure. The RuvB hexamer acts as an ATP-dependent pump, pulling dsDNA into and through the RuvAB complex. HJ branch migration allows RuvC to scan DNA until it finds its consensus sequence, where it cleaves and resolves the cruciform DNA. The sequence is that of Holliday junction branch migration complex subunit RuvA from Chlorobium limicola (strain DSM 245 / NBRC 103803 / 6330).